A 349-amino-acid chain; its full sequence is Ion-translocating oxidoreductase complex subunit D (349 aa).

The next 3 helical transmembrane spans lie at 20–42, 77–99, and 124–144; these read VMQR…FGWG, SAML…WMIV, and AMAA…TWIA. The residue at position 185 (threonine 185) is an FMN phosphoryl threonine. Helical transmembrane passes span 212 to 232, 239 to 259, 265 to 285, 291 to 311, and 315 to 335; these read STGV…LVLL, WHIS…GFLL, ASPL…FIAT, ATSS…VYII, and GGYP…APFI.

Belongs to the NqrB/RnfD family. As to quaternary structure, the complex is composed of six subunits: RnfA, RnfB, RnfC, RnfD, RnfE and RnfG. The cofactor is FMN.

The protein resides in the cell inner membrane. Functionally, part of a membrane-bound complex that couples electron transfer with translocation of ions across the membrane. The protein is Ion-translocating oxidoreductase complex subunit D of Shewanella baltica (strain OS223).